We begin with the raw amino-acid sequence, 578 residues long: MNKSQEQVSFKDVCVDFTQEEWYLLDPAQKILYRDVILENYSNLVSVGYCITKPEVIFKIEQGEEPWILEKGFPSQDPERKWKVDDMLESSQENEDDHFWELLFHNNKTVSVENGDRGSKTFNLGTDPVSLRNYPYKICDSCEMSLKNISGLIISKKSCSRKKPDEFNVCEKLLLDIRHEKIPIGEKSYKYDQKRNAINYHQDLSQPSFGQSFEYSKNGQGFHDEAAFFTNKRSQIGETVCKYNECGRTFIESLKLNISQRPHLEMEPYGCSICGKSFCMNLRFGHQRALTKDNPYEYNEYGEIFCDNSAFIIHQGAYTRKILREYKVSDKTWEKSTVLKHQIVHMGGKSYDYNENGSNFSKKSHLTQLRRAHTGEKTFECGECGKTFWEKSNLTQHQRTHTGEKPYECTECGKAFCQKPHLTNHQRTHTGEKPYECKQCGKTFCVKSNLTEHQRTHTGEKPYECNACGKSFCHRSALTVHQRTHTGEKPFICNECGKSFCVKSNLIVHQRTHTGEKPYKCNECGKTFCEKSALTKHQRTHTGEKPYECNACGKTFSQRSVLTKHQRIHMRVKALSTS.

The KRAB domain occupies 8 to 78; it reads VSFKDVCVDF…LEKGFPSQDP (71 aa). The C2H2-type 1; degenerate zinc-finger motif lies at 239-263; sequence TVCKYNECGRTFIESLKLNISQRPH. Residue lysine 340 forms a Glycyl lysine isopeptide (Lys-Gly) (interchain with G-Cter in SUMO2) linkage. 7 consecutive C2H2-type zinc fingers follow at residues 379-401, 407-429, 435-457, 463-485, 491-513, 519-542, and 547-569; these read FECGECGKTFWEKSNLTQHQRTH, YECTECGKAFCQKPHLTNHQRTH, YECKQCGKTFCVKSNLTEHQRTH, YECNACGKSFCHRSALTVHQRTH, FICNECGKSFCVKSNLIVHQRTH, YKCNECGKTFCEKSALTKHQRTHT, and YECNACGKTFSQRSVLTKHQRIH.

The protein belongs to the krueppel C2H2-type zinc-finger protein family.

It localises to the nucleus. Its function is as follows. May be involved in transcriptional regulation. In Pongo abelii (Sumatran orangutan), this protein is Zinc finger protein 248 (ZNF248).